Here is a 148-residue protein sequence, read N- to C-terminus: Transcriptional regulator MraZ (148 aa).

2 SpoVT-AbrB domains span residues 7 to 56 (KERH…EPDI) and 85 to 128 (LDVV…APER).

The protein belongs to the MraZ family. In terms of assembly, forms oligomers.

It is found in the cytoplasm. It localises to the nucleoid. This chain is Transcriptional regulator MraZ, found in Chlorobium phaeobacteroides (strain DSM 266 / SMG 266 / 2430).